A 312-amino-acid polypeptide reads, in one-letter code: Malate dehydrogenase (312 aa).

Residues 12–17 (GAGFTG) and aspartate 36 contribute to the NAD(+) site. Positions 87 and 93 each coordinate substrate. NAD(+) is bound by residues asparagine 100 and 123–125 (LTN). Asparagine 125 is a binding site for substrate. Position 149 is a phosphoserine (serine 149). Arginine 156 is a binding site for substrate. Histidine 180 functions as the Proton acceptor in the catalytic mechanism.

Belongs to the LDH/MDH superfamily. MDH type 3 family.

It catalyses the reaction (S)-malate + NAD(+) = oxaloacetate + NADH + H(+). In terms of biological role, catalyzes the reversible oxidation of malate to oxaloacetate. This Bacillus cytotoxicus (strain DSM 22905 / CIP 110041 / 391-98 / NVH 391-98) protein is Malate dehydrogenase.